A 297-amino-acid polypeptide reads, in one-letter code: Elongation factor Ts (297 aa).

The segment at 82 to 85 (TDFV) is involved in Mg(2+) ion dislocation from EF-Tu. The span at 223–265 (AQTAAAAETAPPEVSEPEPAAAVTAEEPTPEPVAAAEQPAEPV) shows a compositional bias: low complexity. A disordered region spans residues 223–297 (AQTAAAAETA…GKSRSNKKKK (75 aa)). Residues 286 to 297 (SGGKSRSNKKKK) are compositionally biased toward basic residues.

This sequence belongs to the EF-Ts family.

It is found in the cytoplasm. Associates with the EF-Tu.GDP complex and induces the exchange of GDP to GTP. It remains bound to the aminoacyl-tRNA.EF-Tu.GTP complex up to the GTP hydrolysis stage on the ribosome. In Thermosynechococcus vestitus (strain NIES-2133 / IAM M-273 / BP-1), this protein is Elongation factor Ts.